We begin with the raw amino-acid sequence, 100 residues long: Small ribosomal subunit protein uS14c (100 aa).

The protein belongs to the universal ribosomal protein uS14 family. Part of the 30S ribosomal subunit.

The protein resides in the plastid. The protein localises to the chloroplast. Functionally, binds 16S rRNA, required for the assembly of 30S particles. This is Small ribosomal subunit protein uS14c from Arabis hirsuta (Hairy rock-cress).